The primary structure comprises 240 residues: 4-hydroxy-tetrahydrodipicolinate reductase (240 aa).

NAD(+)-binding positions include G8–M13, G78–T80, and S102–M105. H134 acts as the Proton donor/acceptor in catalysis. A (S)-2,3,4,5-tetrahydrodipicolinate-binding site is contributed by H135. The active-site Proton donor is the K138. G144–T145 provides a ligand contact to (S)-2,3,4,5-tetrahydrodipicolinate.

Belongs to the DapB family.

It localises to the cytoplasm. The catalysed reaction is (S)-2,3,4,5-tetrahydrodipicolinate + NAD(+) + H2O = (2S,4S)-4-hydroxy-2,3,4,5-tetrahydrodipicolinate + NADH + H(+). It catalyses the reaction (S)-2,3,4,5-tetrahydrodipicolinate + NADP(+) + H2O = (2S,4S)-4-hydroxy-2,3,4,5-tetrahydrodipicolinate + NADPH + H(+). Its pathway is amino-acid biosynthesis; L-lysine biosynthesis via DAP pathway; (S)-tetrahydrodipicolinate from L-aspartate: step 4/4. Functionally, catalyzes the conversion of 4-hydroxy-tetrahydrodipicolinate (HTPA) to tetrahydrodipicolinate. This is 4-hydroxy-tetrahydrodipicolinate reductase from Rickettsia canadensis (strain McKiel).